Consider the following 273-residue polypeptide: 4-hydroxy-tetrahydrodipicolinate reductase (273 aa).

NAD(+)-binding positions include 12–17 (GAGGRM) and glutamate 38. Arginine 39 serves as a coordination point for NADP(+). NAD(+) contacts are provided by residues 102–104 (GTT) and 126–129 (AANF). The active-site Proton donor/acceptor is the histidine 159. Residue histidine 160 coordinates (S)-2,3,4,5-tetrahydrodipicolinate. Lysine 163 acts as the Proton donor in catalysis. 169-170 (GT) provides a ligand contact to (S)-2,3,4,5-tetrahydrodipicolinate.

It belongs to the DapB family. Homotetramer.

It localises to the cytoplasm. It carries out the reaction (S)-2,3,4,5-tetrahydrodipicolinate + NAD(+) + H2O = (2S,4S)-4-hydroxy-2,3,4,5-tetrahydrodipicolinate + NADH + H(+). The catalysed reaction is (S)-2,3,4,5-tetrahydrodipicolinate + NADP(+) + H2O = (2S,4S)-4-hydroxy-2,3,4,5-tetrahydrodipicolinate + NADPH + H(+). The protein operates within amino-acid biosynthesis; L-lysine biosynthesis via DAP pathway; (S)-tetrahydrodipicolinate from L-aspartate: step 4/4. Catalyzes the conversion of 4-hydroxy-tetrahydrodipicolinate (HTPA) to tetrahydrodipicolinate. The sequence is that of 4-hydroxy-tetrahydrodipicolinate reductase from Klebsiella pneumoniae subsp. pneumoniae (strain ATCC 700721 / MGH 78578).